A 177-amino-acid polypeptide reads, in one-letter code: Ribosome maturation factor RimM (177 aa).

Positions 104–176 (DGEYYFFEIL…KIIVNMPEWL (73 aa)) constitute a PRC barrel domain.

The protein belongs to the RimM family. Binds ribosomal protein uS19.

It localises to the cytoplasm. Functionally, an accessory protein needed during the final step in the assembly of 30S ribosomal subunit, possibly for assembly of the head region. Essential for efficient processing of 16S rRNA. May be needed both before and after RbfA during the maturation of 16S rRNA. It has affinity for free ribosomal 30S subunits but not for 70S ribosomes. This chain is Ribosome maturation factor RimM, found in Fervidobacterium nodosum (strain ATCC 35602 / DSM 5306 / Rt17-B1).